The chain runs to 482 residues: Exodeoxyribonuclease I (482 aa).

Residues 13 to 194 form the Exonuclease domain; sequence LFYDYETFGI…TSDVYATIEL (182 aa). 3 residues coordinate Mg(2+): Asp16, Glu18, and Asp187. Glu18 contacts substrate. An ExoI SH3-like domain is found at 203–351; sequence PKLFDFFFKY…LVKNVLLKKN (149 aa). Positions 355–471 constitute an ExoI C-terminal domain; sequence NSLNVDLQIY…DLLKYVFKKY (117 aa).

In terms of assembly, monomer. Interacts with ssb (via C-terminus); this interaction stimulates the exonuclease activity by recruiting the enzyme to its substrate. The cofactor is Mg(2+).

It catalyses the reaction Exonucleolytic cleavage in the 3'- to 5'-direction to yield nucleoside 5'-phosphates.. Its function is as follows. Degrades single-stranded DNA (ssDNA) in a highly processive manner. Also functions as a DNA deoxyribophosphodiesterase that releases deoxyribose-phosphate moieties following the cleavage of DNA at an apurinic/apyrimidinic (AP) site by either an AP endonuclease or AP lyase. The polypeptide is Exodeoxyribonuclease I (sbcB) (Buchnera aphidicola subsp. Schizaphis graminum (strain Sg)).